Consider the following 400-residue polypeptide: MDIGTINFNYQSRAVYSAHPQTSRGRLFHEKMNTARTPFQRDRDRIIHSNAFRRLKHKTQVFIADESDHYRTRLTHSIEVSQIARTLARALYLDEDLTEAIALVHDFGHTPFGHAGEEALNEAMMQYGGFDHNAQALRIVTKLEQRYANFDGLNLTWETLEGLVKHNGPLLGPYAKNKEVPSDILQYNAKQDLALDCFAGLEAQCAAIADDIAYNAHDIDDGLRSQFLTLDQFEHVPLTAAILKEITDEHPQLDQARCGYTLVRRQITTMIEDVLKQSHENLARIKPTSINDIYQAKQTIVTFSPSMTVYEKELKNFLFENLYYHEQILSRRNAAKCIVQKLFNCYYENPDTMPESWCQKAVHLKNQELARLIADFLSGMSDHYALREYHRLFDHTNHFV.

An HD domain is found at 73–215; it reads RLTHSIEVSQ…AAIADDIAYN (143 aa).

The protein belongs to the dGTPase family. Type 2 subfamily.

This is Deoxyguanosinetriphosphate triphosphohydrolase-like protein from Bartonella tribocorum (strain CIP 105476 / IBS 506).